The primary structure comprises 368 residues: Chorismate synthase (368 aa).

Arg-46 is an NADP(+) binding site. FMN-binding positions include 124 to 126 (RAS), Gly-284, 299 to 303 (KPTPS), and Arg-326.

Belongs to the chorismate synthase family. The cofactor is FMNH2.

It carries out the reaction 5-O-(1-carboxyvinyl)-3-phosphoshikimate = chorismate + phosphate. The protein operates within metabolic intermediate biosynthesis; chorismate biosynthesis; chorismate from D-erythrose 4-phosphate and phosphoenolpyruvate: step 7/7. In terms of biological role, catalyzes the anti-1,4-elimination of the C-3 phosphate and the C-6 proR hydrogen from 5-enolpyruvylshikimate-3-phosphate (EPSP) to yield chorismate, which is the branch point compound that serves as the starting substrate for the three terminal pathways of aromatic amino acid biosynthesis. This reaction introduces a second double bond into the aromatic ring system. This Pyrobaculum aerophilum (strain ATCC 51768 / DSM 7523 / JCM 9630 / CIP 104966 / NBRC 100827 / IM2) protein is Chorismate synthase.